The primary structure comprises 754 residues: 1,4-alpha-glucan branching enzyme GlgB (754 aa).

The Nucleophile role is filled by Asp431. The active-site Proton donor is the Glu484.

The protein belongs to the glycosyl hydrolase 13 family. GlgB subfamily. Monomer.

It carries out the reaction Transfers a segment of a (1-&gt;4)-alpha-D-glucan chain to a primary hydroxy group in a similar glucan chain.. Its pathway is glycan biosynthesis; glycogen biosynthesis. Its function is as follows. Catalyzes the formation of the alpha-1,6-glucosidic linkages in glycogen by scission of a 1,4-alpha-linked oligosaccharide from growing alpha-1,4-glucan chains and the subsequent attachment of the oligosaccharide to the alpha-1,6 position. The chain is 1,4-alpha-glucan branching enzyme GlgB from Prochlorococcus marinus (strain MIT 9301).